The sequence spans 189 residues: MPRPENPIQLAVIGAAHGTRGEVRVKTFTGDPLAIADYGLLYDEQGKAYEILEARVAKTVVIVRFKGVNDRNAAEALNGTELFIDRSQLPDEELDEDEFFQTDLIGLEAVDGDGKSYGVVSAIFDFGGGDLIELSEKGKRPMLIPFTEAAVPEIDFDKGIIKVEPHAAGLIADEHDNPPHESGKKPKKP.

Residues 95-169 form the PRC barrel domain; the sequence is DEDEFFQTDL…IIKVEPHAAG (75 aa). The tract at residues 168 to 189 is disordered; that stretch reads AGLIADEHDNPPHESGKKPKKP. Over residues 172–189 the composition is skewed to basic and acidic residues; that stretch reads ADEHDNPPHESGKKPKKP.

Belongs to the RimM family. Binds ribosomal protein uS19.

The protein localises to the cytoplasm. Functionally, an accessory protein needed during the final step in the assembly of 30S ribosomal subunit, possibly for assembly of the head region. Essential for efficient processing of 16S rRNA. May be needed both before and after RbfA during the maturation of 16S rRNA. It has affinity for free ribosomal 30S subunits but not for 70S ribosomes. The polypeptide is Ribosome maturation factor RimM (Brucella abortus (strain S19)).